Here is a 341-residue protein sequence, read N- to C-terminus: Phosphate acyltransferase (341 aa).

The protein belongs to the PlsX family. In terms of assembly, homodimer. Probably interacts with PlsY.

It is found in the cytoplasm. The enzyme catalyses a fatty acyl-[ACP] + phosphate = an acyl phosphate + holo-[ACP]. It functions in the pathway lipid metabolism; phospholipid metabolism. Functionally, catalyzes the reversible formation of acyl-phosphate (acyl-PO(4)) from acyl-[acyl-carrier-protein] (acyl-ACP). This enzyme utilizes acyl-ACP as fatty acyl donor, but not acyl-CoA. The sequence is that of Phosphate acyltransferase from Aliivibrio salmonicida (strain LFI1238) (Vibrio salmonicida (strain LFI1238)).